A 274-amino-acid chain; its full sequence is 2,3,4,5-tetrahydropyridine-2,6-dicarboxylate N-succinyltransferase (274 aa).

This sequence belongs to the transferase hexapeptide repeat family.

The protein resides in the cytoplasm. It catalyses the reaction (S)-2,3,4,5-tetrahydrodipicolinate + succinyl-CoA + H2O = (S)-2-succinylamino-6-oxoheptanedioate + CoA. The protein operates within amino-acid biosynthesis; L-lysine biosynthesis via DAP pathway; LL-2,6-diaminopimelate from (S)-tetrahydrodipicolinate (succinylase route): step 1/3. In Klebsiella pneumoniae (strain 342), this protein is 2,3,4,5-tetrahydropyridine-2,6-dicarboxylate N-succinyltransferase.